The following is a 255-amino-acid chain: Pimeloyl-[acyl-carrier protein] methyl ester esterase (255 aa).

Substrate is bound by residues tryptophan 18, 78 to 79, and 139 to 143; these read SL and FLALD. Residue serine 78 is the Nucleophile of the active site. Residues aspartate 203 and histidine 233 contribute to the active site. Residue histidine 233 participates in substrate binding.

The protein belongs to the AB hydrolase superfamily. Carboxylesterase BioH family. In terms of assembly, monomer.

The protein resides in the cytoplasm. It carries out the reaction 6-carboxyhexanoyl-[ACP] methyl ester + H2O = 6-carboxyhexanoyl-[ACP] + methanol + H(+). The protein operates within cofactor biosynthesis; biotin biosynthesis. Functionally, the physiological role of BioH is to remove the methyl group introduced by BioC when the pimeloyl moiety is complete. It allows to synthesize pimeloyl-ACP via the fatty acid synthetic pathway through the hydrolysis of the ester bonds of pimeloyl-ACP esters. The chain is Pimeloyl-[acyl-carrier protein] methyl ester esterase from Xylella fastidiosa (strain 9a5c).